The chain runs to 857 residues: Leucine--tRNA ligase (857 aa).

The 'HIGH' region motif lies at 42 to 52; it reads PYPSGNLHMGH. A 'KMSKS' region motif is present at residues 615–619; the sequence is KMSKS. Position 618 (lysine 618) interacts with ATP.

Belongs to the class-I aminoacyl-tRNA synthetase family.

The protein resides in the cytoplasm. The catalysed reaction is tRNA(Leu) + L-leucine + ATP = L-leucyl-tRNA(Leu) + AMP + diphosphate. In Thermosynechococcus vestitus (strain NIES-2133 / IAM M-273 / BP-1), this protein is Leucine--tRNA ligase.